The primary structure comprises 366 residues: PTI1-like tyrosine-protein kinase 2 (366 aa).

Residues 8–23 (GDKKGDSDLSNEEVHL) show a composition bias toward basic and acidic residues. The interval 8 to 50 (GDKKGDSDLSNEEVHLKSPWQNSEANQKNQKPQAVVKPEAQKE) is disordered. Residues 26–39 (PWQNSEANQKNQKP) show a composition bias toward polar residues. One can recognise a Protein kinase domain in the interval 71 to 353 (FGSKSLIGEG…IVVKALQPLL (283 aa)). ATP-binding positions include 77–85 (IGEGSYGRV) and Lys99. Residue Asp203 is the Proton acceptor of the active site.

Belongs to the protein kinase superfamily. Tyr protein kinase family. In terms of assembly, interacts with OXI1. In terms of processing, autophosphorylated and phosphorylated by OXI1.

It carries out the reaction L-tyrosyl-[protein] + ATP = O-phospho-L-tyrosyl-[protein] + ADP + H(+). Its activity is regulated as follows. Strongly activated in response to phosphatidic acid (PA) and xylanase in a OXI1- and PDK1-dependent manner, and, to a lesser extent, by hydrogen peroxide and flagellin in a OXI1-dependent manner. Probable tyrosine-protein kinase involved in oxidative burst-mediated signaling leading to specific genes expression. The sequence is that of PTI1-like tyrosine-protein kinase 2 (PTI12) from Arabidopsis thaliana (Mouse-ear cress).